Consider the following 181-residue polypeptide: Large ribosomal subunit protein uL5 (181 aa).

It belongs to the universal ribosomal protein uL5 family. Part of the 50S ribosomal subunit; part of the 5S rRNA/L5/L18/L25 subcomplex. Contacts the 5S rRNA and the P site tRNA. Forms a bridge to the 30S subunit in the 70S ribosome.

This is one of the proteins that bind and probably mediate the attachment of the 5S RNA into the large ribosomal subunit, where it forms part of the central protuberance. In the 70S ribosome it contacts protein S13 of the 30S subunit (bridge B1b), connecting the 2 subunits; this bridge is implicated in subunit movement. Contacts the P site tRNA; the 5S rRNA and some of its associated proteins might help stabilize positioning of ribosome-bound tRNAs. This is Large ribosomal subunit protein uL5 from Thermosipho africanus (strain TCF52B).